A 176-amino-acid polypeptide reads, in one-letter code: Large ribosomal subunit protein uL10 (176 aa).

Belongs to the universal ribosomal protein uL10 family. As to quaternary structure, part of the ribosomal stalk of the 50S ribosomal subunit. The N-terminus interacts with L11 and the large rRNA to form the base of the stalk. The C-terminus forms an elongated spine to which L12 dimers bind in a sequential fashion forming a multimeric L10(L12)X complex.

Its function is as follows. Forms part of the ribosomal stalk, playing a central role in the interaction of the ribosome with GTP-bound translation factors. This chain is Large ribosomal subunit protein uL10, found in Dehalococcoides mccartyi (strain ATCC BAA-2100 / JCM 16839 / KCTC 5957 / BAV1).